Reading from the N-terminus, the 585-residue chain is Beta-(1--&gt;2)glucan export ATP-binding/permease protein NdvA (585 aa).

Residues 21–301 (VGAIVIANIV…MKAFATQIFE (281 aa)) form the ABC transmembrane type-1 domain. 6 consecutive transmembrane segments (helical) span residues 22–42 (GAIVIANIVLAAITIAEPILF), 55–75 (VAPMLLLWAGFGVFNTIAFVL), 136–156 (QHLATAVALMLLIPTAFAMDV), 158–178 (LSLILVVLGAAYVMISKVVMS), 245–265 (LNRIASTISMMAILVIGTVLV), and 269–289 (ELGVGEVIAFIGFANLLIGRL). Residues 335-569 (VEFRDISFDF…NGRFAALLRA (235 aa)) enclose the ABC transporter domain. 368-375 (GPTGAGKT) is a binding site for ATP.

It belongs to the ABC transporter superfamily. Beta-(1--&gt;2)glucan exporter (TC 3.A.1.108.1) family. In terms of assembly, homodimer.

The protein localises to the cell inner membrane. The enzyme catalyses [(1-&gt;2)-beta-D-glucosyl](n)(in) + ATP + H2O = [(1-&gt;2)-beta-D-glucosyl](n)(out) + ADP + phosphate + H(+). Its function is as follows. Involved in beta-(1--&gt;2)glucan export which is required for nodulation of legume roots. May be involved in other classes of oligosaccharides export. Transmembrane domains (TMD) form a pore in the inner membrane and the ATP-binding domain (NBD) is responsible for energy generation. This chain is Beta-(1--&gt;2)glucan export ATP-binding/permease protein NdvA, found in Rhizobium meliloti (strain 1021) (Ensifer meliloti).